Consider the following 195-residue polypeptide: HTH-type transcriptional regulator BetI (195 aa).

Residues 8–68 (SIRRRQLIDA…ATMRDITSQL (61 aa)) form the HTH tetR-type domain. Positions 31-50 (TIAQIARRAGVSTGIISHYF) form a DNA-binding region, H-T-H motif.

It functions in the pathway amine and polyamine biosynthesis; betaine biosynthesis via choline pathway [regulation]. Functionally, repressor involved in the biosynthesis of the osmoprotectant glycine betaine. It represses transcription of the choline transporter BetT and the genes of BetAB involved in the synthesis of glycine betaine. The polypeptide is HTH-type transcriptional regulator BetI (Shigella flexneri serotype 5b (strain 8401)).